Consider the following 294-residue polypeptide: uncharacterized protein (294 aa).

2 disordered regions span residues 1–148 (MFLR…LEKP) and 268–294 (DEAA…GKGL). 2 positions are modified to phosphoserine: Ser-34 and Ser-35. Over residues 35–44 (SSENSGSDWD) the composition is skewed to low complexity. Positions 52–62 (DVGHPKTKDSG) are enriched in basic and acidic residues. Ser-71 and Ser-90 each carry phosphoserine. Basic and acidic residues-rich tracts occupy residues 73–92 (PSKE…DSLK) and 278–294 (GLER…GKGL).

This is an uncharacterized protein from Homo sapiens (Human).